Consider the following 156-residue polypeptide: Acanthoscurrin-1 (156 aa).

Residues 1-23 (MAFRMKLVVCIVLLSTLAVMSSA) form the signal peptide. K155 is modified (lysine amide).

In terms of tissue distribution, expressed in hemocytes and secreted into the plasma following bacterial immune challenge.

Its subcellular location is the secreted. Functionally, antimicrobial protein. Strong activity against the Gram-negative bacterium E.coli SBS363 and yeast C.albicans. No detectable activity against the Gram-positive bacterium M.luteus. The chain is Acanthoscurrin-1 from Acanthoscurria gomesiana (Tarantula spider).